Consider the following 1372-residue polypeptide: DNA-directed RNA polymerase subunit beta' (1372 aa).

The Zn(2+) site is built by C69, C71, C84, and C87. D460, D462, and D464 together coordinate Mg(2+). Residues C808, C882, C889, and C892 each coordinate Zn(2+).

This sequence belongs to the RNA polymerase beta' chain family. As to quaternary structure, the RNAP catalytic core consists of 2 alpha, 1 beta, 1 beta' and 1 omega subunit. When a sigma factor is associated with the core the holoenzyme is formed, which can initiate transcription. Mg(2+) serves as cofactor. Requires Zn(2+) as cofactor.

The catalysed reaction is RNA(n) + a ribonucleoside 5'-triphosphate = RNA(n+1) + diphosphate. In terms of biological role, DNA-dependent RNA polymerase catalyzes the transcription of DNA into RNA using the four ribonucleoside triphosphates as substrates. This chain is DNA-directed RNA polymerase subunit beta', found in Rickettsia conorii (strain ATCC VR-613 / Malish 7).